Reading from the N-terminus, the 406-residue chain is Probable peptidoglycan glycosyltransferase FtsW (406 aa).

The next 9 helical transmembrane spans lie at Leu22–Ala42, Phe56–Leu76, Trp86–Ile106, Trp116–Val136, Leu153–Glu173, Val186–Met206, Ile280–Met300, Phe318–Val338, and Leu352–Val372. The span at Ser383–Glu397 shows a compositional bias: basic and acidic residues. Residues Ser383–Ala406 form a disordered region.

It belongs to the SEDS family. FtsW subfamily.

Its subcellular location is the cell inner membrane. The enzyme catalyses [GlcNAc-(1-&gt;4)-Mur2Ac(oyl-L-Ala-gamma-D-Glu-L-Lys-D-Ala-D-Ala)](n)-di-trans,octa-cis-undecaprenyl diphosphate + beta-D-GlcNAc-(1-&gt;4)-Mur2Ac(oyl-L-Ala-gamma-D-Glu-L-Lys-D-Ala-D-Ala)-di-trans,octa-cis-undecaprenyl diphosphate = [GlcNAc-(1-&gt;4)-Mur2Ac(oyl-L-Ala-gamma-D-Glu-L-Lys-D-Ala-D-Ala)](n+1)-di-trans,octa-cis-undecaprenyl diphosphate + di-trans,octa-cis-undecaprenyl diphosphate + H(+). Its pathway is cell wall biogenesis; peptidoglycan biosynthesis. Functionally, peptidoglycan polymerase that is essential for cell division. The protein is Probable peptidoglycan glycosyltransferase FtsW of Marinomonas mediterranea (strain ATCC 700492 / JCM 21426 / NBRC 103028 / MMB-1).